The primary structure comprises 217 residues: Deoxyribose-phosphate aldolase (217 aa).

The active-site Proton donor/acceptor is the Asp-89. The Schiff-base intermediate with acetaldehyde role is filled by Lys-151. The Proton donor/acceptor role is filled by Lys-180.

The protein belongs to the DeoC/FbaB aldolase family. DeoC type 1 subfamily.

The protein localises to the cytoplasm. The enzyme catalyses 2-deoxy-D-ribose 5-phosphate = D-glyceraldehyde 3-phosphate + acetaldehyde. It functions in the pathway carbohydrate degradation; 2-deoxy-D-ribose 1-phosphate degradation; D-glyceraldehyde 3-phosphate and acetaldehyde from 2-deoxy-alpha-D-ribose 1-phosphate: step 2/2. In terms of biological role, catalyzes a reversible aldol reaction between acetaldehyde and D-glyceraldehyde 3-phosphate to generate 2-deoxy-D-ribose 5-phosphate. The protein is Deoxyribose-phosphate aldolase of Mycoplasma mobile (strain ATCC 43663 / 163K / NCTC 11711) (Mesomycoplasma mobile).